The chain runs to 542 residues: Delta 8-(E)-sphingolipid desaturase (542 aa).

One can recognise a Cytochrome b5 heme-binding domain in the interval 1-75; the sequence is MVVSREEVRE…FKRWSIGRVK (75 aa). Heme-binding residues include histidine 35 and histidine 58. Transmembrane regions (helical) follow at residues 215–235 and 248–268; these read WYTL…FIAH and IDNI…LGWW. The Histidine box-1 motif lies at 235–239; that stretch reads HDAGH. Positions 272–276 match the Histidine box-2 motif; sequence HNVHH. 3 consecutive transmembrane segments (helical) span residues 329-346, 360-380, and 393-413; these read LYYP…RLSW, AAWF…WFFY, and FWFL…IVLS. The short motif at 455–459 is the Histidine box-3 element; the sequence is QAIHH.

This sequence belongs to the fatty acid desaturase type 1 family.

It is found in the membrane. It carries out the reaction an N-acylsphing-4-enine + 2 Fe(II)-[cytochrome b5] + O2 + 2 H(+) = a (4E,8E)-4-sphinga-4,8-dienine ceramide + 2 Fe(III)-[cytochrome b5] + 2 H2O. It participates in lipid metabolism; sphingolipid metabolism. Its function is as follows. Delta(8)-fatty-acid desaturase which introduces a double bond at the 8-position in the long-chain base (LCB) of ceramides. Required for the formation of the di-unsaturated sphingoid base (E,E)-sphinga-4,8-dienine during glucosylceramide (GluCer) biosynthesis. This Komagataella phaffii (strain GS115 / ATCC 20864) (Yeast) protein is Delta 8-(E)-sphingolipid desaturase.